The chain runs to 520 residues: Beta-glucosidase 45 (520 aa).

Residues 1-22 (MKNLTSFVIVILLQSLLFHVYG) form the signal peptide. The N-linked (GlcNAc...) asparagine glycan is linked to N3. A beta-D-glucoside is bound by residues Q52, H155, and 200 to 201 (NE). The Proton donor role is filled by E201. C220 and C227 are joined by a disulfide. The N-linked (GlcNAc...) asparagine glycan is linked to N226. Y344 serves as a coordination point for a beta-D-glucoside. C352 and C357 are disulfide-bonded. A glycan (N-linked (GlcNAc...) asparagine) is linked at N378. An a beta-D-glucoside-binding site is contributed by E417. Catalysis depends on E417, which acts as the Nucleophile. N435 carries N-linked (GlcNAc...) asparagine glycosylation. A beta-D-glucoside contacts are provided by residues W466, 473–474 (EW), and F482.

It belongs to the glycosyl hydrolase 1 family. Expressed in stems and siliques.

The catalysed reaction is Hydrolysis of terminal, non-reducing beta-D-glucosyl residues with release of beta-D-glucose.. Functionally, hydrolyzes p-nitrophenyl beta-D-glucoside and natural glucosides such as syringin, coniferin and p-coumaryl alcohol glucoside. May be involved in lignification by hydrolyzing monolignol glucosides. The polypeptide is Beta-glucosidase 45 (Arabidopsis thaliana (Mouse-ear cress)).